We begin with the raw amino-acid sequence, 191 residues long: Peptidyl-tRNA hydrolase (191 aa).

A tRNA-binding site is contributed by tyrosine 14. Catalysis depends on histidine 19, which acts as the Proton acceptor. TRNA is bound by residues tyrosine 64, asparagine 66, and asparagine 112.

This sequence belongs to the PTH family. Monomer.

It is found in the cytoplasm. It carries out the reaction an N-acyl-L-alpha-aminoacyl-tRNA + H2O = an N-acyl-L-amino acid + a tRNA + H(+). In terms of biological role, hydrolyzes ribosome-free peptidyl-tRNAs (with 1 or more amino acids incorporated), which drop off the ribosome during protein synthesis, or as a result of ribosome stalling. Functionally, catalyzes the release of premature peptidyl moieties from peptidyl-tRNA molecules trapped in stalled 50S ribosomal subunits, and thus maintains levels of free tRNAs and 50S ribosomes. This chain is Peptidyl-tRNA hydrolase, found in Syntrophotalea carbinolica (strain DSM 2380 / NBRC 103641 / GraBd1) (Pelobacter carbinolicus).